The sequence spans 784 residues: Toll-like receptor 2 (784 aa).

Residues 1-20 (MPRALWTAWVWAVISVFTEG) form the signal peptide. Topologically, residues 21 to 587 (ASDQASSLSC…ARLSLSECHR (567 aa)) are extracellular. An intrachain disulfide couples Cys-30 to Cys-36. LRR repeat units follow at residues 54–77 (VKSL…RCVN), 78–101 (LKTL…HLRN), 102–125 (LEYL…SLYV), 126–150 (LKFL…HLPN), 151–175 (LRTL…GLTF), 176–199 (LEEL…SIQN), 200–223 (ISHL…IVSS), 224–250 (LDYL…INTS), 251–278 (VKKL…YVSG), 279–308 (ILEV…YLGN), 309–337 (VETL…LTGK), 338–361 (VKRV…HLKS), 362–388 (LEYL…AWPV), 389–414 (LQTL…TLKN), 415–437 (LNNL…WPGK), 438–457 (MKQL…CLPQ), 458–478 (TLEI…ILPQ), 479–500 (LKEL…FLPV), and 501–524 (LSVM…SFPQ). N-linked (GlcNAc...) asparagine glycosylation is present at Asn-114. N-linked (GlcNAc...) asparagine glycosylation is present at Asn-199. The N-linked (GlcNAc...) asparagine glycan is linked to Asn-248. A disulfide bond links Cys-353 and Cys-382. A disulfide bridge links Cys-432 with Cys-454. An N-linked (GlcNAc...) asparagine glycan is attached at Asn-442. In terms of domain architecture, LRRCT spans 525–579 (LKALEAGGNNFICSCDFLSFAQGQQALARVLVDWPDGYRCDAPSHVRGQRVQDAR). A helical membrane pass occupies residues 588-608 (AAVVSAVCCALFLLLLLTGVL). Over 609 to 784 (CHRFHGLWYM…WLNLRAAIRS (176 aa)) the chain is Cytoplasmic. One can recognise a TIR domain in the interval 639–782 (LCYDAFVSYS…AFWLNLRAAI (144 aa)). A Glycyl lysine isopeptide (Lys-Gly) (interchain with G-Cter in ubiquitin) cross-link involves residue Lys-754. An ATG16L1-binding motif motif is present at residues 761 to 778 (YLEWPTDETHREAFWLNL).

This sequence belongs to the Toll-like receptor family. Interacts with LY96, TLR1 and TLR6 (via extracellular domain). TLR2 seems to exist in heterodimers with either TLR1 or TLR6 before stimulation by the ligand. The heterodimers form bigger oligomers in response to their corresponding ligands as well as further heterotypic associations with other receptors such as CD14 and/or CD36. Binds MYD88 (via TIR domain). Interacts with TICAM1. Interacts with CNPY3. Interacts with ATG16L1. Interacts with PPP1R11. Interacts with TICAM2. Interacts with TIRAP. Ubiquitinated at Lys-754 by PPP1R11, leading to its degradation. Deubiquitinated by USP2. Post-translationally, glycosylation of Asn-442 is critical for secretion of the N-terminal ectodomain of TLR2.

It localises to the membrane. Its subcellular location is the cytoplasmic vesicle. The protein resides in the phagosome membrane. The protein localises to the membrane raft. Cooperates with LY96 to mediate the innate immune response to bacterial lipoproteins and other microbial cell wall components. Cooperates with TLR1 or TLR6 to mediate the innate immune response to bacterial lipoproteins or lipopeptides. Acts via MYD88 and TRAF6, leading to NF-kappa-B activation, cytokine secretion and the inflammatory response. May also promote apoptosis in response to lipoproteins. Forms activation clusters composed of several receptors depending on the ligand, these clusters trigger signaling from the cell surface and subsequently are targeted to the Golgi in a lipid-raft dependent pathway. Forms the cluster TLR2:TLR6:CD14:CD36 in response to diacylated lipopeptides and TLR2:TLR1:CD14 in response to triacylated lipopeptides. This Ovis aries (Sheep) protein is Toll-like receptor 2 (TLR2).